The chain runs to 262 residues: Cell division protein ZapD (262 aa).

Belongs to the ZapD family. In terms of assembly, interacts with FtsZ.

Its subcellular location is the cytoplasm. Functionally, cell division factor that enhances FtsZ-ring assembly. Directly interacts with FtsZ and promotes bundling of FtsZ protofilaments, with a reduction in FtsZ GTPase activity. This is Cell division protein ZapD from Nitrosomonas europaea (strain ATCC 19718 / CIP 103999 / KCTC 2705 / NBRC 14298).